Here is a 121-residue protein sequence, read N- to C-terminus: UPF0738 protein BPUM_1088 (121 aa).

This sequence belongs to the UPF0738 family.

This Bacillus pumilus (strain SAFR-032) protein is UPF0738 protein BPUM_1088.